Here is a 1344-residue protein sequence, read N- to C-terminus: Xanthine dehydrogenase (1344 aa).

One can recognise a 2Fe-2S ferredoxin-type domain in the interval 9–96 (SVLVFFVNGK…GCAVTTVEGI (88 aa)). Positions 48, 53, 56, 78, 118, 121, 153, and 155 each coordinate [2Fe-2S] cluster. The FAD-binding PCMH-type domain occupies 236-425 (FSSERVTWYR…LGIHFQKTTP (190 aa)). Residues 264-271 (LVVGNTEV), F344, 354-358 (CLGGN), D367, L415, and K433 each bind FAD. Mo-molybdopterin is bound by residues Q781 and F812. Residues E816 and R894 each coordinate substrate. Mo-molybdopterin is bound at residue R926. Substrate is bound at residue F928. A1093 provides a ligand contact to Mo-molybdopterin. Residue E1276 is the Proton acceptor of the active site.

Belongs to the xanthine dehydrogenase family. In terms of assembly, homodimer. The cofactor is FAD. Requires Mo-molybdopterin as cofactor. [2Fe-2S] cluster serves as cofactor.

The protein localises to the peroxisome. It carries out the reaction xanthine + NAD(+) + H2O = urate + NADH + H(+). The catalysed reaction is hypoxanthine + NAD(+) + H2O = xanthine + NADH + H(+). In terms of biological role, key enzyme in purine degradation. Catalyzes the oxidation of hypoxanthine to xanthine. Catalyzes the oxidation of xanthine to uric acid. The protein is Xanthine dehydrogenase (Xdh) of Drosophila subobscura (Fruit fly).